We begin with the raw amino-acid sequence, 487 residues long: Betaine aldehyde dehydrogenase (487 aa).

Residues Ser26 and Asp93 each coordinate K(+). Residue 150 to 152 (GAW) coordinates NAD(+). Lys162 serves as the catalytic Charge relay system. NAD(+) is bound by residues 176-179 (KPSE) and 229-232 (SVPT). Residue Leu244 coordinates K(+). Catalysis depends on Glu250, which acts as the Proton acceptor. 3 residues coordinate NAD(+): Gly252, Cys284, and Glu384. The Nucleophile role is filled by Cys284. Cys284 is subject to Cysteine sulfenic acid (-SOH). 2 residues coordinate K(+): Lys454 and Gly457. The active-site Charge relay system is Glu461.

The protein belongs to the aldehyde dehydrogenase family. Dimer of dimers. K(+) serves as cofactor.

The catalysed reaction is betaine aldehyde + NAD(+) + H2O = glycine betaine + NADH + 2 H(+). It functions in the pathway amine and polyamine biosynthesis; betaine biosynthesis via choline pathway; betaine from betaine aldehyde: step 1/1. In terms of biological role, involved in the biosynthesis of the osmoprotectant glycine betaine. Catalyzes the irreversible oxidation of betaine aldehyde to the corresponding acid. This chain is Betaine aldehyde dehydrogenase, found in Rhizobium leguminosarum bv. trifolii (strain WSM2304).